A 200-amino-acid chain; its full sequence is Late embryogenesis abundant protein 19 (200 aa).

Disordered stretches follow at residues 1 to 158 and 172 to 200; these read MASH…KSTV and TEDKAGTDDGANKDTSATAAATETTARDH. 5 stretches are compositionally biased toward basic and acidic residues: residues 13–23, 30–42, 53–81, 88–97, and 105–114; these read GETKAHTEEKA, SKDKASEAKDRAS, QDTKEATKEKAQAAKERASETAQAAKDKT, ARDKAAESKD, and EKTEQAKQKA. The stretch at 52-81 forms a coiled coil; sequence GQDTKEATKEKAQAAKERASETAQAAKDKT. Low complexity predominate over residues 115 to 130; sequence AETAGAAKQKTAETAQ. Positions 145–156 are enriched in polar residues; the sequence is SVLQQASEQVKS. Basic and acidic residues predominate over residues 172–183; that stretch reads TEDKAGTDDGAN. A compositionally biased stretch (low complexity) spans 186-200; it reads TSATAAATETTARDH.

It belongs to the LEA type 4 family. As to expression, expressed in the shoot apex and leaves.

Involved in response to drought stress. This Oryza sativa subsp. indica (Rice) protein is Late embryogenesis abundant protein 19.